The following is a 916-amino-acid chain: Protein translocase subunit SecA (916 aa).

Residues glutamine 87, 105 to 109, and aspartate 507 contribute to the ATP site; that span reads GEGKT. Positions 900, 902, 911, and 912 each coordinate Zn(2+).

It belongs to the SecA family. In terms of assembly, monomer and homodimer. Part of the essential Sec protein translocation apparatus which comprises SecA, SecYEG and auxiliary proteins SecDF-YajC and YidC. Zn(2+) serves as cofactor.

It localises to the cell inner membrane. The protein localises to the cytoplasm. It carries out the reaction ATP + H2O + cellular proteinSide 1 = ADP + phosphate + cellular proteinSide 2.. Part of the Sec protein translocase complex. Interacts with the SecYEG preprotein conducting channel. Has a central role in coupling the hydrolysis of ATP to the transfer of proteins into and across the cell membrane, serving both as a receptor for the preprotein-SecB complex and as an ATP-driven molecular motor driving the stepwise translocation of polypeptide chains across the membrane. The polypeptide is Protein translocase subunit SecA (Neisseria gonorrhoeae (strain NCCP11945)).